Reading from the N-terminus, the 267-residue chain is MPGQQATKHESLLDQLSLKGKVVVVTGASGPKGMGIEAARGCAEMGAAVAITYASRAQGAEENVKELEKTYGIKAKAYKCQVDSYESCEKLVKDVVADFGQIDAFIANAGATADSGILDGSVEAWNHVVQVDLNGTFHCAKAVGHHFKERGTGSLVITASMSGHIANFPQEQTSYNVAKAGCIHMARSLANEWRDFARVNSISPGYIDTGLSDFVPKETQQLWHSMIPMGRDGLAKELKGAYVYFASDASTYTTGADLLIDGGYTTR.

NADP(+) is bound by residues Asn108 and Lys141. Residue Ser160 is the Proton donor of the active site. Positions 175, 179, 207, and 209 each coordinate NADP(+). The Proton acceptor role is filled by Tyr175. The active-site Lowers pKa of active site Tyr is the Lys179.

It belongs to the short-chain dehydrogenases/reductases (SDR) family. In terms of assembly, exists as monomer, dimer and tetramer.

The catalysed reaction is D-mannitol + NADP(+) = D-fructose + NADPH + H(+). Its function is as follows. Interconverts D-mannitol and D-fructose. Not active with fructose 6-phosphate or NADH. The sequence is that of NADP-dependent mannitol dehydrogenase from Davidiella tassiana (Mycosphaerella tassiana).